A 461-amino-acid polypeptide reads, in one-letter code: Photosystem II CP43 reaction center protein (461 aa).

Positions 1-2 (ME) are excised as a propeptide. Residue T3 is modified to N-acetylthreonine. A Phosphothreonine modification is found at T3. Transmembrane regions (helical) follow at residues 57-81 (LFEVAHFVPEKPMYEQGLILLPHLA), 122-143 (LLGPETLEESFPFFGYVWKDRN), 166-188 (KALYFGGVYDTWAPGGGDVRKIT), 243-263 (KPFAWARRALVWSGEAYLSYS), and 279-300 (WFNNTAYPSEFYGPTGPEASQA). E355 provides a ligand contact to [CaMn4O5] cluster. A helical membrane pass occupies residues 435–459 (RARAAAAGFEKGIDRDFEPVLSMTP).

Belongs to the PsbB/PsbC family. PsbC subfamily. As to quaternary structure, PSII is composed of 1 copy each of membrane proteins PsbA, PsbB, PsbC, PsbD, PsbE, PsbF, PsbH, PsbI, PsbJ, PsbK, PsbL, PsbM, PsbT, PsbX, PsbY, PsbZ, Psb30/Ycf12, at least 3 peripheral proteins of the oxygen-evolving complex and a large number of cofactors. It forms dimeric complexes. Binds multiple chlorophylls and provides some of the ligands for the Ca-4Mn-5O cluster of the oxygen-evolving complex. It may also provide a ligand for a Cl- that is required for oxygen evolution. PSII binds additional chlorophylls, carotenoids and specific lipids. is required as a cofactor.

The protein resides in the plastid. It is found in the chloroplast thylakoid membrane. Functionally, one of the components of the core complex of photosystem II (PSII). It binds chlorophyll and helps catalyze the primary light-induced photochemical processes of PSII. PSII is a light-driven water:plastoquinone oxidoreductase, using light energy to abstract electrons from H(2)O, generating O(2) and a proton gradient subsequently used for ATP formation. The sequence is that of Photosystem II CP43 reaction center protein from Gossypium barbadense (Sea Island cotton).